Here is a 161-residue protein sequence, read N- to C-terminus: Small heat shock protein ibp (161 aa).

In terms of domain architecture, sHSP spans 35 to 150 (EKPLSDTPAY…KPKKIFINIP (116 aa)).

The protein belongs to the small heat shock protein (HSP20) family.

This is Small heat shock protein ibp (ibp) from Buchnera aphidicola subsp. Schizaphis graminum (strain Sg).